The primary structure comprises 132 residues: L-ectoine synthase (132 aa).

The protein belongs to the ectoine synthase family.

It carries out the reaction (2S)-4-acetamido-2-aminobutanoate = L-ectoine + H2O. It functions in the pathway amine and polyamine biosynthesis; ectoine biosynthesis; L-ectoine from L-aspartate 4-semialdehyde: step 3/3. Catalyzes the circularization of gamma-N-acetyl-alpha,gamma-diaminobutyric acid (ADABA) to ectoine (1,4,5,6-tetrahydro-2-methyl-4-pyrimidine carboxylic acid), which is an excellent osmoprotectant. This Rhodococcus opacus (strain B4) protein is L-ectoine synthase.